Consider the following 833-residue polypeptide: Multiphosphoryl transfer protein 2 (833 aa).

An HPr domain is found at 2–91; that stretch reads ALIVEFICEL…QWLRDEFPHC (90 aa). The active-site Tele-phosphohistidine intermediate; for HPr activity is the His16. His16 is subject to Phosphohistidine; by EI. Residues 143 to 653 form a PTS EI region; it reads LGNLPAAKGV…AAKARMAQLD (511 aa). The Tele-phosphohistidine intermediate; for PTS EI activity role is filled by His301. The residue at position 301 (His301) is a Phosphohistidine; by autocatalysis. Residues Arg408 and Arg444 each coordinate phosphoenolpyruvate. Positions 543 and 567 each coordinate Mg(2+). Phosphoenolpyruvate-binding positions include 566-567 and Arg577; that span reads ND. Cys614 acts as the Proton donor; for EI activity in catalysis. The 143-residue stretch at 688 to 830 folds into the PTS EIIA type-2 domain; sequence PLVTAECITL…DAIASLLQHE (143 aa). The active-site Tele-phosphohistidine intermediate; for PTS EIIA activity is His750. His750 is modified (phosphohistidine; by HPr).

It belongs to the PEP-utilizing enzyme family. Requires Mg(2+) as cofactor.

It localises to the cytoplasm. The catalysed reaction is L-histidyl-[protein] + phosphoenolpyruvate = N(pros)-phospho-L-histidyl-[protein] + pyruvate. It catalyses the reaction D-fructose(out) + N(pros)-phospho-L-histidyl-[protein] = D-fructose 1-phosphate(in) + L-histidyl-[protein]. Multifunctional protein that includes general (non sugar-specific) and sugar-specific components of the phosphoenolpyruvate-dependent sugar phosphotransferase system (sugar PTS). This major carbohydrate active transport system catalyzes the phosphorylation of incoming sugar substrates concomitantly with their translocation across the cell membrane. The enzyme II FrwABC PTS system is involved in fructose transport. In Escherichia coli (strain K12), this protein is Multiphosphoryl transfer protein 2.